The primary structure comprises 427 residues: Light-independent protochlorophyllide reductase subunit N (427 aa).

Residues cysteine 30, cysteine 55, and cysteine 116 each coordinate [4Fe-4S] cluster.

The protein belongs to the BchN/ChlN family. In terms of assembly, protochlorophyllide reductase is composed of three subunits; BchL, BchN and BchB. Forms a heterotetramer of two BchB and two BchN subunits. It depends on [4Fe-4S] cluster as a cofactor.

The enzyme catalyses chlorophyllide a + oxidized 2[4Fe-4S]-[ferredoxin] + 2 ADP + 2 phosphate = protochlorophyllide a + reduced 2[4Fe-4S]-[ferredoxin] + 2 ATP + 2 H2O. The protein operates within porphyrin-containing compound metabolism; bacteriochlorophyll biosynthesis (light-independent). In terms of biological role, component of the dark-operative protochlorophyllide reductase (DPOR) that uses Mg-ATP and reduced ferredoxin to reduce ring D of protochlorophyllide (Pchlide) to form chlorophyllide a (Chlide). This reaction is light-independent. The NB-protein (BchN-BchB) is the catalytic component of the complex. This chain is Light-independent protochlorophyllide reductase subunit N, found in Rhodopseudomonas palustris (strain BisA53).